The primary structure comprises 658 residues: Protein kinase and PP2C-like domain-containing protein (658 aa).

The Protein kinase domain maps to 30 to 314 (FTLLSPIAKG…DNVVLELESI (285 aa)). Residues 36-44 (IAKGSESVV) and lysine 57 contribute to the ATP site. The Proton acceptor role is filled by aspartate 149. In terms of domain architecture, PPM-type phosphatase spans 392 to 648 (SCGSFATCGR…DNITVIVVFL (257 aa)). 4 residues coordinate Mn(2+): aspartate 428, glycine 429, aspartate 599, and aspartate 639.

This sequence in the N-terminal section; belongs to the protein kinase superfamily. Ser/Thr protein kinase family. It in the C-terminal section; belongs to the PP2C family. Requires Mg(2+) as cofactor. Mn(2+) serves as cofactor.

It carries out the reaction L-seryl-[protein] + ATP = O-phospho-L-seryl-[protein] + ADP + H(+). The enzyme catalyses L-threonyl-[protein] + ATP = O-phospho-L-threonyl-[protein] + ADP + H(+). It catalyses the reaction O-phospho-L-seryl-[protein] + H2O = L-seryl-[protein] + phosphate. The catalysed reaction is O-phospho-L-threonyl-[protein] + H2O = L-threonyl-[protein] + phosphate. The polypeptide is Protein kinase and PP2C-like domain-containing protein (Arabidopsis thaliana (Mouse-ear cress)).